Reading from the N-terminus, the 155-residue chain is Ribonuclease H (155 aa).

The RNase H type-1 domain maps to Met1–Met142. Residues Asp10, Glu48, Asp70, and Asp134 each contribute to the Mg(2+) site.

The protein belongs to the RNase H family. Monomer. It depends on Mg(2+) as a cofactor.

It is found in the cytoplasm. The enzyme catalyses Endonucleolytic cleavage to 5'-phosphomonoester.. Endonuclease that specifically degrades the RNA of RNA-DNA hybrids. This Salmonella paratyphi C (strain RKS4594) protein is Ribonuclease H.